The primary structure comprises 79 residues: Toxin ICK-20 (79 aa).

A signal peptide spans 1–20 (MMKYFLVLCLVVLGVAAVQA). Disulfide bonds link C43–C57, C50–C61, C56–C78, and C68–C74. N71 carries N-linked (GlcNAc...) asparagine glycosylation.

The protein belongs to the neurotoxin 13 (insecticidal toxin ABC) family. ICK-21 subfamily. Expressed by the venom gland.

It is found in the secreted. Functionally, ion channel inhibitor. In Trittame loki (Brush-footed trapdoor spider), this protein is Toxin ICK-20.